Consider the following 406-residue polypeptide: Lysophospholipid transporter LplT (406 aa).

11 helical membrane passes run 16 to 36 (MVAV…LLFA), 53 to 73 (ILQM…GQIA), 91 to 111 (AGAL…LVGV), 139 to 159 (MMEA…GILA), 164 to 184 (MAAL…NLFI), 227 to 247 (LFWG…PVAL), 253 to 273 (ATPT…AGAA), 285 to 305 (CLPA…QNSM), 310 to 330 (LLLI…NALL), 349 to 369 (LGEN…VKLG), and 372 to 392 (VVAV…LLWG).

The protein belongs to the major facilitator superfamily. LplT (TC 2.A.1.42) family.

Its subcellular location is the cell inner membrane. Functionally, catalyzes the facilitated diffusion of 2-acyl-glycero-3-phosphoethanolamine (2-acyl-GPE) into the cell. This chain is Lysophospholipid transporter LplT, found in Yersinia pestis bv. Antiqua (strain Antiqua).